Consider the following 21-residue polypeptide: Cold shock protein CspSt (21 aa).

The region spanning 1–21 (KNGTVKWFNAEKGFGFITSED) is the CSD domain.

It localises to the cytoplasm. This chain is Cold shock protein CspSt, found in Streptococcus thermophilus.